Consider the following 176-residue polypeptide: Co-chaperone protein HscB homolog (176 aa).

Residues 8–80 (DFFALFGLPV…LRRATYLLKL (73 aa)) form the J domain.

It belongs to the HscB family. In terms of assembly, interacts with HscA and stimulates its ATPase activity.

Co-chaperone involved in the maturation of iron-sulfur cluster-containing proteins. Seems to help targeting proteins to be folded toward HscA. This chain is Co-chaperone protein HscB homolog, found in Cupriavidus taiwanensis (strain DSM 17343 / BCRC 17206 / CCUG 44338 / CIP 107171 / LMG 19424 / R1) (Ralstonia taiwanensis (strain LMG 19424)).